Here is a 736-residue protein sequence, read N- to C-terminus: Elongation factor 2 (736 aa).

The tr-type G domain maps to 18–261 (EQIRNIGITA…MVVKHIPNPR (244 aa)). GTP-binding positions include 27–34 (AHVDHGKT), 93–97 (DTPGH), and 147–150 (NKID). Diphthamide is present on H602.

This sequence belongs to the TRAFAC class translation factor GTPase superfamily. Classic translation factor GTPase family. EF-G/EF-2 subfamily.

The protein resides in the cytoplasm. Catalyzes the GTP-dependent ribosomal translocation step during translation elongation. During this step, the ribosome changes from the pre-translocational (PRE) to the post-translocational (POST) state as the newly formed A-site-bound peptidyl-tRNA and P-site-bound deacylated tRNA move to the P and E sites, respectively. Catalyzes the coordinated movement of the two tRNA molecules, the mRNA and conformational changes in the ribosome. This Desulfurococcus amylolyticus (strain DSM 18924 / JCM 16383 / VKM B-2413 / 1221n) (Desulfurococcus kamchatkensis) protein is Elongation factor 2.